The chain runs to 178 residues: Putative magnesium-dependent phosphatase YER134C (178 aa).

Asp-11 (nucleophile) is an active-site residue. Asp-11 is a binding site for Mg(2+). Phosphate-binding residues include Leu-12, Asp-13, Ser-74, and Arg-75. A Mg(2+)-binding site is contributed by Asp-13. Catalysis depends on Asp-13, which acts as the Proton donor. Arg-75 contacts substrate. Asp-141 is a Mg(2+) binding site.

It belongs to the HAD-like hydrolase superfamily.

The protein localises to the cytoplasm. It localises to the nucleus. It catalyses the reaction O-phospho-L-tyrosyl-[protein] + H2O = L-tyrosyl-[protein] + phosphate. Functionally, magnesium-dependent phosphatase which may act as a tyrosine phosphatase. This is Putative magnesium-dependent phosphatase YER134C from Saccharomyces cerevisiae (strain ATCC 204508 / S288c) (Baker's yeast).